Consider the following 426-residue polypeptide: Gamma-glutamyl phosphate reductase (426 aa).

It belongs to the gamma-glutamyl phosphate reductase family.

The protein resides in the cytoplasm. It carries out the reaction L-glutamate 5-semialdehyde + phosphate + NADP(+) = L-glutamyl 5-phosphate + NADPH + H(+). It functions in the pathway amino-acid biosynthesis; L-proline biosynthesis; L-glutamate 5-semialdehyde from L-glutamate: step 2/2. In terms of biological role, catalyzes the NADPH-dependent reduction of L-glutamate 5-phosphate into L-glutamate 5-semialdehyde and phosphate. The product spontaneously undergoes cyclization to form 1-pyrroline-5-carboxylate. The protein is Gamma-glutamyl phosphate reductase of Cupriavidus necator (strain ATCC 17699 / DSM 428 / KCTC 22496 / NCIMB 10442 / H16 / Stanier 337) (Ralstonia eutropha).